The following is an 89-amino-acid chain: Putative defensin-like protein 254 (89 aa).

The signal sequence occupies residues 1–20 (MHNISFKLLLLCDLFLSSSS). 2 cysteine pairs are disulfide-bonded: Cys-31-Cys-48 and Cys-37-Cys-55.

The protein belongs to the DEFL family.

Its subcellular location is the secreted. The chain is Putative defensin-like protein 254 from Arabidopsis thaliana (Mouse-ear cress).